The following is a 1041-amino-acid chain: Putative transcription elongation factor SPT5 homolog 1 (1041 aa).

Residues M1–R133 form a disordered region. Acidic residues-rich tracts occupy residues E7–E32, D53–Y69, and D99–I114. Position 59 is a phosphoserine (S59). The segment covering P122 to R133 has biased composition (basic and acidic residues). 4 consecutive KOW domains span residues D273–V300, H425–E452, Y477–H504, and V601–G628. Disordered stretches follow at residues N662–S713 and D768–L921. Residues G691–H703 show a composition bias toward gly residues. One can recognise a KOW 5 domain in the interval D712–N739. Residues D804–A814 show a composition bias toward basic and acidic residues. Polar residues-rich tracts occupy residues S835 to P844 and T893 to S904. One can recognise a KOW 6 domain in the interval P988–S1015.

This sequence belongs to the SPT5 family.

It is found in the nucleus. May regulate transcription elongation by RNA polymerase II. May enhance transcriptional pausing at sites proximal to the promoter, which may in turn facilitate the assembly of an elongation competent RNA polymerase II complex. The polypeptide is Putative transcription elongation factor SPT5 homolog 1 (Arabidopsis thaliana (Mouse-ear cress)).